A 61-amino-acid chain; its full sequence is Small ribosomal subunit protein uS14C (61 aa).

4 residues coordinate Zn(2+): C24, C27, C40, and C43.

Belongs to the universal ribosomal protein uS14 family. Zinc-binding uS14 subfamily. In terms of assembly, part of the 30S ribosomal subunit. Contacts proteins S3 and S10. Requires Zn(2+) as cofactor.

In terms of biological role, binds 16S rRNA, required for the assembly of 30S particles and may also be responsible for determining the conformation of the 16S rRNA at the A site. This chain is Small ribosomal subunit protein uS14C, found in Bacillus licheniformis (strain ATCC 14580 / DSM 13 / JCM 2505 / CCUG 7422 / NBRC 12200 / NCIMB 9375 / NCTC 10341 / NRRL NRS-1264 / Gibson 46).